The chain runs to 312 residues: Malate dehydrogenase (312 aa).

NAD(+)-binding positions include 7 to 13 (GAAGGIG) and aspartate 34. Residues arginine 81 and arginine 87 each coordinate substrate. NAD(+) is bound by residues asparagine 94 and 117–119 (ITN). The substrate site is built by asparagine 119 and arginine 153. Histidine 177 acts as the Proton acceptor in catalysis. Residue methionine 227 participates in NAD(+) binding.

Belongs to the LDH/MDH superfamily. MDH type 1 family. As to quaternary structure, homodimer.

It catalyses the reaction (S)-malate + NAD(+) = oxaloacetate + NADH + H(+). Its function is as follows. Catalyzes the reversible oxidation of malate to oxaloacetate. The chain is Malate dehydrogenase from Escherichia coli O6:K15:H31 (strain 536 / UPEC).